A 271-amino-acid chain; its full sequence is Acetylglutamate kinase (271 aa).

Residues 41-42, Arg-63, and Asn-166 each bind substrate; that span reads GG.

This sequence belongs to the acetylglutamate kinase family. ArgB subfamily.

The protein resides in the cytoplasm. It carries out the reaction N-acetyl-L-glutamate + ATP = N-acetyl-L-glutamyl 5-phosphate + ADP. It functions in the pathway amino-acid biosynthesis; L-arginine biosynthesis; N(2)-acetyl-L-ornithine from L-glutamate: step 2/4. In terms of biological role, catalyzes the ATP-dependent phosphorylation of N-acetyl-L-glutamate. The chain is Acetylglutamate kinase from Anaeromyxobacter sp. (strain Fw109-5).